The sequence spans 158 residues: Eukaryotic translation initiation factor 5A-1 (158 aa).

Residues 1-10 show a composition bias toward basic and acidic residues; sequence MSDEEHHFES. The disordered stretch occupies residues 1–21; the sequence is MSDEEHHFESSDAGASKTYPQ. The residue at position 2 (S2) is a Phosphoserine. The residue at position 51 (K51) is a Hypusine.

This sequence belongs to the eIF-5A family. Lys-51 undergoes hypusination, a unique post-translational modification that consists in the addition of a butylamino group from spermidine to lysine side chain, leading to the formation of the unusual amino acid hypusine. eIF-5As are the only known proteins to undergo this modification, which is essential for their function. Expressed in leaf vasculature and inflorescence stems. Present in xylem tissue but not in phloem, and in developing vessel members, but not in mature vessels members. Detected in anthers.

Its function is as follows. Translation factor that promotes translation elongation and termination, particularly upon ribosome stalling at specific amino acid sequence contexts. Binds between the exit (E) and peptidyl (P) site of the ribosome and promotes rescue of stalled ribosome: specifically required for efficient translation of polyproline-containing peptides as well as other motifs that stall the ribosome. Acts as a ribosome quality control (RQC) cofactor by joining the RQC complex to facilitate peptidyl transfer during CAT tailing step. Involved in xylogenesis. The protein is Eukaryotic translation initiation factor 5A-1 (ELF5A-1) of Arabidopsis thaliana (Mouse-ear cress).